Here is a 247-residue protein sequence, read N- to C-terminus: 6-carboxyhexanoate--CoA ligase (247 aa).

Belongs to the BioW family. Homodimer. Requires Mg(2+) as cofactor.

It catalyses the reaction heptanedioate + ATP + CoA = 6-carboxyhexanoyl-CoA + AMP + diphosphate. The protein operates within metabolic intermediate metabolism; pimeloyl-CoA biosynthesis; pimeloyl-CoA from pimelate: step 1/1. Its function is as follows. Catalyzes the transformation of pimelate into pimeloyl-CoA with concomitant hydrolysis of ATP to AMP. This is 6-carboxyhexanoate--CoA ligase from Persephonella marina (strain DSM 14350 / EX-H1).